Reading from the N-terminus, the 310-residue chain is Probable plastid-lipid-associated protein 2, chloroplastic (310 aa).

The N-terminal 59 residues, methionine 1–arginine 59, are a transit peptide targeting the chloroplast. A Phosphothreonine modification is found at threonine 61. The stretch at glutamate 65–leucine 94 forms a coiled coil.

The protein belongs to the PAP/fibrillin family.

The protein localises to the plastid. It is found in the chloroplast. The protein resides in the plastoglobule. Functionally, probably involved in light/cold stress-related jasmonate (JA) biosynthesis. The protein is Probable plastid-lipid-associated protein 2, chloroplastic (PAP2) of Arabidopsis thaliana (Mouse-ear cress).